Here is a 447-residue protein sequence, read N- to C-terminus: Trigger factor (447 aa).

The region spanning 164 to 249 (GNQVTFDFEG…VKLVEKSKLP (86 aa)) is the PPIase FKBP-type domain.

The protein belongs to the FKBP-type PPIase family. Tig subfamily.

It localises to the cytoplasm. The enzyme catalyses [protein]-peptidylproline (omega=180) = [protein]-peptidylproline (omega=0). Its function is as follows. Involved in protein export. Acts as a chaperone by maintaining the newly synthesized protein in an open conformation. Functions as a peptidyl-prolyl cis-trans isomerase. The protein is Trigger factor of Psychrobacter cryohalolentis (strain ATCC BAA-1226 / DSM 17306 / VKM B-2378 / K5).